We begin with the raw amino-acid sequence, 691 residues long: MSTPEITPAAVTFRVPAGTPAGAAMRELGLPNKGPEAIVCVKETEGESAGQLRDLSWVPQQDVEVAAVPANTDEGRGVIRHSCAHVLAQAVQKEFPGTKLGIGPAIDNGFYYDFQVAEPFTPEDLNKLEKTMKKIIKSGQKFERKAYDDVEQARAEYADEPFKTELIADKGNVDPDSDEATEVGAGELTAYSNVNPRTGEVEWYDLCRGPHVPTTRYIPAFALTRSSAAYWRGDQSKAGLQRIYGTAWESKEALAEYQTMMAEAEKRDHRRLGQELDLFSFPDEIGSGFPVFHPDGGIVRLEMEEHSRKRHIASGYSFVNTPHVTKGDLFQKSGHLDFYADGMFPPMQLDGETDDEGNVTKPAQDYYAKPMNCPMHNLIFASRGRSYRELPLRLFEFGTVYRYEKSGVIHGLTRARGFTQDDAHIYCTEDQLEQELTTVLEFIISLLRDYGLDDFYLELSTKDPNKFVGSDEIWERSTEILERVATKSGLELVPDPAGAAFYGPKISVQARDAIGRTWQMSTVQLDFNLPERFNLEYTAPDGSKQRPIMIHRALFGSIERFFGVLLEHYAGAFPAWLAPHQVVGIPVADEFNEYLENFAADLRAQGIRAEVDTSDDRMQKKIRNHTTGKVPFMLLVGGRDVEANAVSFRFLDGTQVNGVPREDALRIISNWIAERRNDQPSSELIQPLVEV.

Residues 1-69 enclose the TGS domain; that stretch reads MSTPEITPAA…QQDVEVAAVP (69 aa). The catalytic stretch occupies residues 268-574; it reads DHRRLGQELD…LLEHYAGAFP (307 aa). Residues Cys-373, His-424, and His-551 each contribute to the Zn(2+) site.

Belongs to the class-II aminoacyl-tRNA synthetase family. As to quaternary structure, homodimer. The cofactor is Zn(2+).

The protein resides in the cytoplasm. The catalysed reaction is tRNA(Thr) + L-threonine + ATP = L-threonyl-tRNA(Thr) + AMP + diphosphate + H(+). Catalyzes the attachment of threonine to tRNA(Thr) in a two-step reaction: L-threonine is first activated by ATP to form Thr-AMP and then transferred to the acceptor end of tRNA(Thr). Also edits incorrectly charged L-seryl-tRNA(Thr). The chain is Threonine--tRNA ligase from Corynebacterium jeikeium (strain K411).